Consider the following 882-residue polypeptide: Alanine--tRNA ligase (882 aa).

Zn(2+)-binding residues include His-576, His-580, Cys-678, and His-682.

This sequence belongs to the class-II aminoacyl-tRNA synthetase family. Zn(2+) serves as cofactor.

It localises to the cytoplasm. The catalysed reaction is tRNA(Ala) + L-alanine + ATP = L-alanyl-tRNA(Ala) + AMP + diphosphate. Catalyzes the attachment of alanine to tRNA(Ala) in a two-step reaction: alanine is first activated by ATP to form Ala-AMP and then transferred to the acceptor end of tRNA(Ala). Also edits incorrectly charged Ser-tRNA(Ala) and Gly-tRNA(Ala) via its editing domain. This chain is Alanine--tRNA ligase, found in Anaplasma marginale (strain St. Maries).